A 473-amino-acid polypeptide reads, in one-letter code: Reticulon-4 receptor (473 aa).

The signal sequence occupies residues 1-26 (MKRASAGGSRLLAWVLWLQAWQVAAP). Cystine bridges form between cysteine 27/cysteine 33 and cysteine 31/cysteine 43. The LRRNT domain occupies 27–54 (CPGACVCYNEPKVTTSCPQQGLQAVPVG). 9 LRR repeats span residues 55–79 (IPAA…SFRA), 81–103 (RNLT…AFTG), 104–128 (LALL…TFHG), 129–152 (LGRL…LFRG), 153–176 (LAAL…TFRD), 178–200 (GNLT…AFRG), 202–224 (HSLD…AFRD), 225–248 (LGRL…ALAP), and 250–273 (RALQ…PLWA). An N-linked (GlcNAc...) asparagine glycan is attached at asparagine 82. The N-linked (GlcNAc...) asparagine glycan is linked to asparagine 179. The LRRCT domain occupies 260–310 (NPWVCDCRARPLWAWLQKFRGSSSEVPCSLPQRLAGRDLKRLAANDLQGCA). Intrachain disulfides connect cysteine 264–cysteine 287, cysteine 266–cysteine 335, and cysteine 309–cysteine 336. The segment at 346-447 (VLEPGRPASA…GGGTGDSEGS (102 aa)) is disordered. A compositionally biased stretch (basic residues) spans 413–429 (PRRRPGCSRKNRTRSHC). Residues 434 to 445 (AGSGGGGTGDSE) are compositionally biased toward gly residues. Serine 447 carries the GPI-anchor amidated serine lipid modification. Positions 448–473 (GALPSLTCSLTPLGLALVLWTVLGPC) are cleaved as a propeptide — removed in mature form.

This sequence belongs to the Nogo receptor family. Homodimer. Interacts with MAG. Interacts with RTN4. Interacts with NGFR. Interacts with LINGO1. Interacts with KIAA0319L. Interacts with OLFM1; this inhibits interaction with LINGO1 and NGFR. Interacts with OMG. N-glycosylated. O-glycosylated. Contains terminal sialic acid groups on its glycan chains. Widespread in the brain but highest levels in the gray matter. Low levels in heart and kidney; not expressed in oligodendrocytes (white matter).

The protein resides in the cell membrane. It localises to the membrane raft. It is found in the cell projection. The protein localises to the dendrite. Its subcellular location is the axon. The protein resides in the perikaryon. Functionally, receptor for RTN4, OMG and MAG. Functions as a receptor for the sialylated gangliosides GT1b and GM1. Besides, functions as a receptor for chondroitin sulfate proteoglycans. Can also bind heparin. Intracellular signaling cascades are triggered via the coreceptor NGFR. Signaling mediates activation of Rho and downstream reorganization of the actin cytoskeleton. Mediates axonal growth inhibition. Plays a role in regulating axon regeneration and neuronal plasticity in the adult central nervous system. Plays a role in postnatal brain development. Required for normal axon migration across the brain midline and normal formation of the corpus callosum. Protects motoneurons against apoptosis; protection against apoptosis is probably mediated via interaction with MAG. Acts in conjunction with RTN4 and LINGO1 in regulating neuronal precursor cell motility during cortical development. Like other family members, plays a role in restricting the number dendritic spines and the number of synapses that are formed during brain development. The sequence is that of Reticulon-4 receptor (RTN4R) from Homo sapiens (Human).